We begin with the raw amino-acid sequence, 1067 residues long: Protein bric-a-brac 2 (1067 aa).

Residues 30-121 are disordered; it reads MAPPEEPKMV…PPRPLTSSEV (92 aa). Composition is skewed to basic and acidic residues over residues 47-62 and 86-98; these read HLED…REVE and KSPE…ELVK. A Phosphotyrosine modification is found at Y55. Phosphoserine occurs at positions 56, 87, and 147. Residues 223-288 form the BTB domain; sequence VDVTLSCEGH…MYKGEINVCQ (66 aa). 3 disordered regions span residues 312–412, 444–505, and 525–563; these read GRGE…QSQP, ANQR…AAQH, and GAAG…SHHD. A compositionally biased stretch (acidic residues) spans 326-335; it reads FDDEDEEEEL. Phosphoserine is present on S377. A Phosphothreonine modification is found at T384. A compositionally biased stretch (low complexity) spans 391-412; that stretch reads GGESEISERGSSGTPGQSQSQP. Composition is skewed to gly residues over residues 525 to 538 and 545 to 556; these read GAAG…GSGS and GGTGVAGSGAGA. In terms of domain architecture, HTH psq-type spans 635-687; that stretch reads FRERGPLKSWRPEAMAEAIFSVLKEGLSLSQAARKFDIPYPTFVLYANRVHNM. Residues 645-690 constitute a DNA-binding region (H-T-H motif); that stretch reads RPEAMAEAIFSVLKEGLSLSQAARKFDIPYPTFVLYANRVHNMLGP. Residues 697-708 constitute a DNA-binding region (a.T hook); it reads DPRPKARGRPQR. Disordered stretches follow at residues 796–829, 860–879, and 891–967; these read QILS…PHAQ, AKHQ…PDLS, and VMPS…PYSA. Residues 812–829 show a composition bias toward low complexity; that stretch reads AHHQQQPSHHQQQSPHAQ. A compositionally biased stretch (low complexity) spans 904–914; sequence AAPNSAASYAR. Residues 915–933 are compositionally biased toward basic and acidic residues; the sequence is ELSRERERDRERERERELS. Positions 934–949 are enriched in low complexity; that stretch reads RQYGSQSRGSSSGSGS.

Leg imaginal disk at the central region of the tarsus and in eye antenna disk at the basal cylinder.

Its subcellular location is the nucleus. In terms of biological role, probably acts as a transcriptional regulator. Required for the specification of the tarsal segment. Also involved in antenna development. This chain is Protein bric-a-brac 2 (bab2), found in Drosophila melanogaster (Fruit fly).